A 284-amino-acid chain; its full sequence is Asialoglycoprotein receptor 1 (284 aa).

Residues 1-18 (MTKDYQDFQHLDNDNDHH) show a composition bias toward basic and acidic residues. The segment at 1-25 (MTKDYQDFQHLDNDNDHHQLRRGPP) is disordered. Topologically, residues 1–39 (MTKDYQDFQHLDNDNDHHQLRRGPPPTPRLLQRLCSGSR) are cytoplasmic. The Endocytosis signal signature appears at 5–8 (YQDF). Residue Cys35 is the site of S-palmitoyl cysteine attachment. A helical; Signal-anchor for type II membrane protein transmembrane segment spans residues 40 to 60 (LLLLSSSLSILLLVVVCVITS). Positions 59 to 117 (TSQNSQLREDLLALRQNFSNLTVSTEDQVKALSTQGSSVGRKMKLVESKLEKQQKDLTE) form a coiled coil. The Extracellular segment spans residues 61 to 284 (QNSQLREDLL…VCETKLDKAN (224 aa)). 3 N-linked (GlcNAc...) asparagine glycosylation sites follow: Asn75, Asn78, and Asn146. 3 disulfides stabilise this stretch: Cys153/Cys164, Cys181/Cys276, and Cys254/Cys268. A C-type lectin domain is found at 160 to 277 (YEGSCYWFSS…CRRPYRWVCE (118 aa)). Residues Val190, Glu196, Asp215, Gln239, Asp241, Glu252, Asp253, Asn264, Asp265, and Glu277 each contribute to the Ca(2+) site.

In terms of assembly, interacts with LASS2. Phosphorylated on a cytoplasmic Ser residue. As to expression, expressed exclusively in hepatic parenchymal cells.

The protein localises to the membrane. In terms of biological role, mediates the endocytosis of plasma glycoproteins to which the terminal sialic acid residue on their complex carbohydrate moieties has been removed. The receptor recognizes terminal galactose and N-acetylgalactosamine units. After ligand binding to the receptor, the resulting complex is internalized and transported to a sorting organelle, where receptor and ligand are disassociated. The receptor then returns to the cell membrane surface. This Mus musculus (Mouse) protein is Asialoglycoprotein receptor 1 (Asgr1).